The primary structure comprises 1152 residues: DNA-directed RNA polymerase subunit beta (1152 aa).

This sequence belongs to the RNA polymerase beta chain family. In terms of assembly, the RNAP catalytic core consists of 2 alpha, 1 beta, 1 beta' and 1 omega subunit. When a sigma factor is associated with the core the holoenzyme is formed, which can initiate transcription.

The catalysed reaction is RNA(n) + a ribonucleoside 5'-triphosphate = RNA(n+1) + diphosphate. DNA-dependent RNA polymerase catalyzes the transcription of DNA into RNA using the four ribonucleoside triphosphates as substrates. The sequence is that of DNA-directed RNA polymerase subunit beta from Deinococcus geothermalis (strain DSM 11300 / CIP 105573 / AG-3a).